The primary structure comprises 597 residues: Elongation factor 4 (597 aa).

In terms of domain architecture, tr-type G spans 2–184; sequence KNIRNFSIIA…EIVAKIPAPT (183 aa). GTP contacts are provided by residues 14-19 and 131-134; these read DHGKST and NKID.

The protein belongs to the TRAFAC class translation factor GTPase superfamily. Classic translation factor GTPase family. LepA subfamily.

The protein localises to the cell inner membrane. It carries out the reaction GTP + H2O = GDP + phosphate + H(+). Functionally, required for accurate and efficient protein synthesis under certain stress conditions. May act as a fidelity factor of the translation reaction, by catalyzing a one-codon backward translocation of tRNAs on improperly translocated ribosomes. Back-translocation proceeds from a post-translocation (POST) complex to a pre-translocation (PRE) complex, thus giving elongation factor G a second chance to translocate the tRNAs correctly. Binds to ribosomes in a GTP-dependent manner. This Neisseria meningitidis serogroup B (strain ATCC BAA-335 / MC58) protein is Elongation factor 4.